A 658-amino-acid chain; its full sequence is UvrABC system protein B (658 aa).

One can recognise a Helicase ATP-binding domain in the interval 26-413; that stretch reads EGINSGKKKQ…SPEVIEQIIR (388 aa). 39 to 46 is an ATP binding site; the sequence is GATGTGKT. Positions 92–115 match the Beta-hairpin motif; it reads YYDYYQPEAYVPQTDTFIEKDAQI. One can recognise a Helicase C-terminal domain in the interval 430-596; it reads QIDDLLGEIQ…TIQKGVRDVI (167 aa). The 36-residue stretch at 622 to 657 folds into the UVR domain; that stretch reads EKTIAKMEAEMKEAAKALDFERAAELRDLLLELKAE.

This sequence belongs to the UvrB family. As to quaternary structure, forms a heterotetramer with UvrA during the search for lesions. Interacts with UvrC in an incision complex.

It localises to the cytoplasm. In terms of biological role, the UvrABC repair system catalyzes the recognition and processing of DNA lesions. A damage recognition complex composed of 2 UvrA and 2 UvrB subunits scans DNA for abnormalities. Upon binding of the UvrA(2)B(2) complex to a putative damaged site, the DNA wraps around one UvrB monomer. DNA wrap is dependent on ATP binding by UvrB and probably causes local melting of the DNA helix, facilitating insertion of UvrB beta-hairpin between the DNA strands. Then UvrB probes one DNA strand for the presence of a lesion. If a lesion is found the UvrA subunits dissociate and the UvrB-DNA preincision complex is formed. This complex is subsequently bound by UvrC and the second UvrB is released. If no lesion is found, the DNA wraps around the other UvrB subunit that will check the other stand for damage. This Bacillus cereus (strain ATCC 10987 / NRS 248) protein is UvrABC system protein B.